A 368-amino-acid chain; its full sequence is C-glycoside deglycosidase alpha subunit (368 aa).

Residue glutamate 145 coordinates a divalent metal cation. The active-site Proton acceptor is histidine 147. A divalent metal cation-binding residues include aspartate 177, histidine 275, and glutamate 311.

This sequence belongs to the C-glycoside deglycosidase alpha subunit family. Heterodimer composed of an alpha subunit (CarB) and a beta subunit (CarC). Requires a divalent metal cation as cofactor.

It carries out the reaction 3''-dehydroisovitexin = 1,5-anhydro-D-erythro-hex-1-en-3-ulose + apigenin. The enzyme catalyses 3''-dehydroisoorientin = 1,5-anhydro-D-erythro-hex-1-en-3-ulose + luteolin. Its function is as follows. Carbon-carbon bond-cleaving enzyme which participates in the metabolism of C-glycosides. Acts on the C6-glycosylated compounds 3''-dehydroisovitexin (3''-oxo-isovitexin) and 3''-dehydroisoorientin (3''-oxo-homoorientin). Shows weak activity with 3'-dehydromangiferin (3'-oxo-mangiferin). The polypeptide is C-glycoside deglycosidase alpha subunit (Microbacterium trichothecenolyticum (Aureobacterium trichothecenolyticum)).